A 315-amino-acid chain; its full sequence is Methionyl-tRNA formyltransferase (315 aa).

An N-terminal domain region spans residues 2 to 189; that stretch reads SDSLRIIFAG…LITTLKQLAD (188 aa). 113–116 is a binding site for (6S)-5,6,7,8-tetrahydrofolate; the sequence is SLLP. A C-terminal domain region spans residues 210-315; it reads KEEARIDWSL…EWFIPGNRLA (106 aa).

This sequence belongs to the Fmt family.

It carries out the reaction L-methionyl-tRNA(fMet) + (6R)-10-formyltetrahydrofolate = N-formyl-L-methionyl-tRNA(fMet) + (6S)-5,6,7,8-tetrahydrofolate + H(+). Attaches a formyl group to the free amino group of methionyl-tRNA(fMet). The formyl group appears to play a dual role in the initiator identity of N-formylmethionyl-tRNA by promoting its recognition by IF2 and preventing the misappropriation of this tRNA by the elongation apparatus. In Salmonella choleraesuis (strain SC-B67), this protein is Methionyl-tRNA formyltransferase.